The following is a 571-amino-acid chain: OTU domain-containing protein 5 (571 aa).

Disordered regions lie at residues 1–111 (MTIL…GPGG) and 146–175 (PGHS…GAGY). A compositionally biased stretch (pro residues) spans 11–30 (PPDADPANEPPPPGPMPPAP). A compositionally biased stretch (gly residues) spans 32 to 47 (RGGGVGVGGGGTGVGG). Residues 63-75 (ASPPPQGPLPGPP) are compositionally biased toward pro residues. A Phosphoserine modification is found at serine 64. Residues 84–97 (AVPPGAVAGPRPQQ) show a composition bias toward low complexity. Serine 165 is subject to Phosphoserine. Tyrosine 175 carries the post-translational modification Phosphotyrosine. Position 177 is a phosphoserine (serine 177). Threonine 195 bears the Phosphothreonine mark. Positions 213–341 (FIIKQMKEDG…NIHYNSVVNP (129 aa)) constitute an OTU domain. A cys-loop region spans residues 218 to 224 (MKEDGAC). Aspartate 221 is a catalytic residue. Cysteine 224 (nucleophile) is an active-site residue. Residues 273 to 283 (KRKNNCHGNHI) are variable-loop. At serine 328 the chain carries Phosphoserine; by MTOR. The segment at 329–334 (YHRNIH) is his-loop. Residue histidine 334 is part of the active site. Serine 337 and serine 375 each carry phosphoserine. Residues 418-502 (ARQVRGPSQP…PGTSSQFSAG (85 aa)) are disordered. 2 stretches are compositionally biased toward low complexity: residues 430–443 (ASAT…AASS) and 450–462 (SRSP…ASSP). The residue at position 452 (serine 452) is a Phosphoserine. Threonine 507 is modified (phosphothreonine). Position 508 is a phosphoserine; by MTOR (serine 508).

This sequence belongs to the peptidase C85 family. As to quaternary structure, interacts with TRAF3. Post-translationally, phosphorylation at Ser-177 is required for deubiquitinating activity. Phosphorylation at Ser-328, Ser-337 and Ser-508 by MTOR promotes its activity. Expressed in various tissues, including the liver and placenta, as well as in peripheral blood leukocytes.

It is found in the nucleus. The catalysed reaction is Thiol-dependent hydrolysis of ester, thioester, amide, peptide and isopeptide bonds formed by the C-terminal Gly of ubiquitin (a 76-residue protein attached to proteins as an intracellular targeting signal).. With respect to regulation, inhibited by N-ethyl-maleimide (NEM). Its function is as follows. Deubiquitinating enzyme that functions as a negative regulator of the innate immune system. Has peptidase activity towards 'Lys-48'- and 'Lys-63'-linked polyubiquitin chains. Can also cleave 'Lys-11'-linked ubiquitin chains (in vitro). Acts via TRAF3 deubiquitination and subsequent suppression of type I interferon (IFN) production. Controls neuroectodermal differentiation through cleaving 'Lys-48'-linked ubiquitin chains to counteract degradation of select chromatin regulators such as ARID1A, HDAC2 and HCF1. Acts as a positive regulator of mTORC1 and mTORC2 signaling following phosphorylation by MTOR: acts by mediating deubiquitination of BTRC, leading to its stability. The chain is OTU domain-containing protein 5 from Homo sapiens (Human).